A 124-amino-acid polypeptide reads, in one-letter code: UPF0299 membrane protein VP1300 (124 aa).

Transmembrane regions (helical) follow at residues 9-29 (LIQLLISLFLIMGALGIGITI), 35-55 (VSVPGSVIGMLVLFFSMTLGL), 72-92 (MILLFVPISVGLMQHFDMLLA), and 95-115 (LPIIASAVGGSLIVLVSLAWL).

It belongs to the UPF0299 family.

It localises to the cell inner membrane. This is UPF0299 membrane protein VP1300 from Vibrio parahaemolyticus serotype O3:K6 (strain RIMD 2210633).